A 113-amino-acid polypeptide reads, in one-letter code: Mitochondrial import inner membrane translocase subunit PAM16 like 1 (113 aa).

Residues Met1–Gly48 constitute a mitochondrion transit peptide. Residues Glu55–Ala104 form a J-like region.

The protein belongs to the TIM16/PAM16 family. Expressed at low levels in seedlings, rosettes and inflorescence.

The protein localises to the mitochondrion inner membrane. Regulates ATP-dependent protein translocation into the mitochondrial matrix. This Arabidopsis thaliana (Mouse-ear cress) protein is Mitochondrial import inner membrane translocase subunit PAM16 like 1.